Reading from the N-terminus, the 595-residue chain is Arginine--tRNA ligase (595 aa).

A 'HIGH' region motif is present at residues 132-142; that stretch reads ANPTGPLHVGH.

It belongs to the class-I aminoacyl-tRNA synthetase family. Monomer.

It localises to the cytoplasm. The enzyme catalyses tRNA(Arg) + L-arginine + ATP = L-arginyl-tRNA(Arg) + AMP + diphosphate. In Cupriavidus taiwanensis (strain DSM 17343 / BCRC 17206 / CCUG 44338 / CIP 107171 / LMG 19424 / R1) (Ralstonia taiwanensis (strain LMG 19424)), this protein is Arginine--tRNA ligase.